The chain runs to 264 residues: Proteasome assembly chaperone 2 (264 aa).

Threonine 137 carries the phosphothreonine modification.

It belongs to the PSMG2 family. As to quaternary structure, forms a heterodimer with PSMG1. The PSMG1-PSMG2 heterodimer interacts directly with the PSMA5 and PSMA7 proteasome alpha subunits. Degraded by the proteasome upon completion of 20S proteasome maturation.

The protein localises to the nucleus. Functionally, chaperone protein which promotes assembly of the 20S proteasome as part of a heterodimer with PSMG1. The PSMG1-PSMG2 heterodimer binds to the PSMA5 and PSMA7 proteasome subunits, promotes assembly of the proteasome alpha subunits into the heteroheptameric alpha ring and prevents alpha ring dimerization. The polypeptide is Proteasome assembly chaperone 2 (Mus musculus (Mouse)).